Consider the following 442-residue polypeptide: Histidine--tRNA ligase (442 aa).

Belongs to the class-II aminoacyl-tRNA synthetase family. As to quaternary structure, homodimer.

It is found in the cytoplasm. It catalyses the reaction tRNA(His) + L-histidine + ATP = L-histidyl-tRNA(His) + AMP + diphosphate + H(+). The sequence is that of Histidine--tRNA ligase from Wolinella succinogenes (strain ATCC 29543 / DSM 1740 / CCUG 13145 / JCM 31913 / LMG 7466 / NCTC 11488 / FDC 602W) (Vibrio succinogenes).